A 236-amino-acid polypeptide reads, in one-letter code: GCN5-related N-acetyltransferase 8 (236 aa).

Residues 96–235 (ATITSSPSPD…DALEAFDQVN (140 aa)) enclose the N-acetyltransferase domain. Acetyl-CoA contacts are provided by residues 161-163 (IFV), 169-174 (RKGFGS), 200-202 (NVN), and Tyr-207. Residue Tyr-207 is the Proton donor of the active site.

The protein belongs to the acetyltransferase family. GNAT subfamily. As to quaternary structure, oligomer. Expressed throughout the plant.

It is found in the cytoplasm. The protein resides in the nucleus. The catalysed reaction is an N-terminal L-alpha-aminoacyl-[protein] + acetyl-CoA = N-terminal N(alpha)-acetyl-L-alpha-aminoacyl-[protein] + CoA + H(+). It catalyses the reaction L-lysyl-[protein] + acetyl-CoA = N(6)-acetyl-L-lysyl-[protein] + CoA + H(+). Probable protein acetyltransferase with dual specificity triggering both N-alpha-acetylation (NTA) and epsilon-lysine acetylation (KA). In Arabidopsis thaliana (Mouse-ear cress), this protein is GCN5-related N-acetyltransferase 8.